The sequence spans 260 residues: UPF0246 protein APJL_0596 (260 aa).

The protein belongs to the UPF0246 family.

This is UPF0246 protein APJL_0596 from Actinobacillus pleuropneumoniae serotype 3 (strain JL03).